The following is a 560-amino-acid chain: 2-succinyl-5-enolpyruvyl-6-hydroxy-3-cyclohexene-1-carboxylate synthase (560 aa).

Belongs to the TPP enzyme family. MenD subfamily. As to quaternary structure, homodimer. The cofactor is Mg(2+). Requires Mn(2+) as cofactor. It depends on thiamine diphosphate as a cofactor.

The catalysed reaction is isochorismate + 2-oxoglutarate + H(+) = 5-enolpyruvoyl-6-hydroxy-2-succinyl-cyclohex-3-ene-1-carboxylate + CO2. It participates in quinol/quinone metabolism; 1,4-dihydroxy-2-naphthoate biosynthesis; 1,4-dihydroxy-2-naphthoate from chorismate: step 2/7. Its pathway is quinol/quinone metabolism; menaquinone biosynthesis. Its function is as follows. Catalyzes the thiamine diphosphate-dependent decarboxylation of 2-oxoglutarate and the subsequent addition of the resulting succinic semialdehyde-thiamine pyrophosphate anion to isochorismate to yield 2-succinyl-5-enolpyruvyl-6-hydroxy-3-cyclohexene-1-carboxylate (SEPHCHC). In Staphylococcus saprophyticus subsp. saprophyticus (strain ATCC 15305 / DSM 20229 / NCIMB 8711 / NCTC 7292 / S-41), this protein is 2-succinyl-5-enolpyruvyl-6-hydroxy-3-cyclohexene-1-carboxylate synthase.